Here is a 66-residue protein sequence, read N- to C-terminus: Putative alpha-neurotoxin RjAa44 (66 aa).

One can recognise an LCN-type CS-alpha/beta domain in the interval 1-60 (KEGYPVDWGNCKYECMSDAYCKDLCADRKAKSGYCYKLNWSCYCEGLPDDSPIKTNGHCR). Disulfide bonds link C11–C59, C15–C35, C21–C42, and C25–C44.

It belongs to the long (4 C-C) scorpion toxin superfamily. Sodium channel inhibitor family. Alpha subfamily. In terms of tissue distribution, expressed by the venom gland.

It localises to the secreted. In terms of biological role, alpha toxins bind voltage-independently at site-3 of sodium channels (Nav) and inhibit the inactivation of the activated channels, thereby blocking neuronal transmission. This chain is Putative alpha-neurotoxin RjAa44, found in Rhopalurus junceus (Caribbean blue scorpion).